The following is a 331-amino-acid chain: Adenosine deaminase (331 aa).

2 residues coordinate Zn(2+): histidine 12 and histidine 14. Substrate-binding residues include histidine 14, aspartate 16, and glycine 170. Histidine 197 lines the Zn(2+) pocket. Glutamate 200 functions as the Proton donor in the catalytic mechanism. Aspartate 278 is a binding site for Zn(2+).

This sequence belongs to the metallo-dependent hydrolases superfamily. Adenosine and AMP deaminases family. Adenosine deaminase subfamily. The cofactor is Zn(2+).

The catalysed reaction is adenosine + H2O + H(+) = inosine + NH4(+). It catalyses the reaction 2'-deoxyadenosine + H2O + H(+) = 2'-deoxyinosine + NH4(+). Functionally, catalyzes the hydrolytic deamination of adenosine and 2-deoxyadenosine. The chain is Adenosine deaminase from Vibrio vulnificus (strain YJ016).